The primary structure comprises 114 residues: KPKEDREWEKFKTKHITSQSVADFNCNRTMNDPAYTPDGQCKPVNTFIHSTTGPVKEICRRATGRVNKSSTQQFTLTTCKNPIRCKYSQSNTTNFICITCRDNYPVHFVKTGKC.

The active-site Proton acceptor is the histidine 15. 4 disulfides stabilise this stretch: cysteine 26–cysteine 79, cysteine 41–cysteine 85, cysteine 59–cysteine 100, and cysteine 97–cysteine 114. Asparagine 27 carries N-linked (GlcNAc...) asparagine glycosylation. Residue 42–46 (KPVNT) coordinates substrate. Residues asparagine 67 and asparagine 91 are each glycosylated (N-linked (GlcNAc...) asparagine). Catalysis depends on histidine 107, which acts as the Proton donor.

It belongs to the pancreatic ribonuclease family. Monomer. There are at least five different forms arising from glycan heterogeneity.

It is found in the secreted. Functionally, endonuclease, hydrolyzes highly polymerized RNA, poly(U) and poly(C), and the dinucleotides CpA and UpA. More active towards rCA than rUA or rUG. Has cytotoxic activity against cultured human submaxillary gland carcinoma cells. The polypeptide is Amphinase-1 (Lithobates pipiens (Northern leopard frog)).